We begin with the raw amino-acid sequence, 106 residues long: Large ribosomal subunit protein uL24 (106 aa).

Belongs to the universal ribosomal protein uL24 family. Part of the 50S ribosomal subunit.

Functionally, one of two assembly initiator proteins, it binds directly to the 5'-end of the 23S rRNA, where it nucleates assembly of the 50S subunit. Its function is as follows. One of the proteins that surrounds the polypeptide exit tunnel on the outside of the subunit. In Alkalilimnicola ehrlichii (strain ATCC BAA-1101 / DSM 17681 / MLHE-1), this protein is Large ribosomal subunit protein uL24.